We begin with the raw amino-acid sequence, 370 residues long: Phospho-N-acetylmuramoyl-pentapeptide-transferase (370 aa).

The next 11 helical transmembrane spans lie at 15-35 (PLEG…AAFA), 44-64 (LLSL…WWGV), 93-113 (MGGL…SWSG), 115-135 (AAEQ…VGGI), 155-175 (LLLQ…RGWI), 183-203 (FDIN…VFLA), 213-233 (GLDG…ALQL), 240-260 (GDPS…GFLV), 268-288 (VFMG…VALL), 296-316 (LIMG…VWVF), and 347-367 (QLVV…GIFF).

This sequence belongs to the glycosyltransferase 4 family. MraY subfamily. Mg(2+) serves as cofactor.

It localises to the cell inner membrane. It catalyses the reaction UDP-N-acetyl-alpha-D-muramoyl-L-alanyl-gamma-D-glutamyl-meso-2,6-diaminopimeloyl-D-alanyl-D-alanine + di-trans,octa-cis-undecaprenyl phosphate = di-trans,octa-cis-undecaprenyl diphospho-N-acetyl-alpha-D-muramoyl-L-alanyl-D-glutamyl-meso-2,6-diaminopimeloyl-D-alanyl-D-alanine + UMP. It participates in cell wall biogenesis; peptidoglycan biosynthesis. Functionally, catalyzes the initial step of the lipid cycle reactions in the biosynthesis of the cell wall peptidoglycan: transfers peptidoglycan precursor phospho-MurNAc-pentapeptide from UDP-MurNAc-pentapeptide onto the lipid carrier undecaprenyl phosphate, yielding undecaprenyl-pyrophosphoryl-MurNAc-pentapeptide, known as lipid I. This Synechococcus sp. (strain CC9311) protein is Phospho-N-acetylmuramoyl-pentapeptide-transferase.